The sequence spans 468 residues: Argininosuccinate lyase (468 aa).

Belongs to the lyase 1 family. Argininosuccinate lyase subfamily.

Its subcellular location is the cytoplasm. The enzyme catalyses 2-(N(omega)-L-arginino)succinate = fumarate + L-arginine. It functions in the pathway amino-acid biosynthesis; L-arginine biosynthesis; L-arginine from L-ornithine and carbamoyl phosphate: step 3/3. The chain is Argininosuccinate lyase from Cutibacterium acnes (strain DSM 16379 / KPA171202) (Propionibacterium acnes).